The primary structure comprises 121 residues: Putative viral protein-binding protein C1 (121 aa).

Residues 21 to 57 (PWDRTRGHPDVPWRNLTSSPTRPLAQPAGSCMPAEPS) form a disordered region.

In terms of assembly, interacts with core protein of hepatitis B virus.

This Homo sapiens (Human) protein is Putative viral protein-binding protein C1.